A 150-amino-acid chain; its full sequence is MEVFIDADACPVRTEAFKVAERHRLIVHVVGNAPVPVPHNDPRVRRVIVPTTPDAADDWIAEHIGEGDICITADIPLAARCLKKGAKAIGTTGKAFTEDSIGMALSMRDLMRDLREAGAVSGGPASFAPKDRSRFLQALEEAIQAVKRGR.

It belongs to the UPF0178 family.

This Rhodospirillum rubrum (strain ATCC 11170 / ATH 1.1.1 / DSM 467 / LMG 4362 / NCIMB 8255 / S1) protein is UPF0178 protein Rru_A0086.